Reading from the N-terminus, the 180-residue chain is MPLLNSVTTPYAEALLQVVNENDQTEEMVNEVKQLLTLINDAPELEKTLSSPVLETETKRKIIIEIFSDRINSSLLNFLKLLADRQRIGIVTSILNRFLEIHRENSNIALATVTSAVELTDDQKGLITKKIINIAGTEKLELVTKIDPSLIGGFVASVGSKVIDASLASQIRKLGLSLSK.

Belongs to the ATPase delta chain family. In terms of assembly, F-type ATPases have 2 components, F(1) - the catalytic core - and F(0) - the membrane proton channel. F(1) has five subunits: alpha(3), beta(3), gamma(1), delta(1), epsilon(1). CF(0) has four main subunits: a(1), b(1), b'(1) and c(10-14). The alpha and beta chains form an alternating ring which encloses part of the gamma chain. F(1) is attached to F(0) by a central stalk formed by the gamma and epsilon chains, while a peripheral stalk is formed by the delta, b and b' chains.

The protein resides in the cellular thylakoid membrane. Its function is as follows. F(1)F(0) ATP synthase produces ATP from ADP in the presence of a proton or sodium gradient. F-type ATPases consist of two structural domains, F(1) containing the extramembraneous catalytic core and F(0) containing the membrane proton channel, linked together by a central stalk and a peripheral stalk. During catalysis, ATP synthesis in the catalytic domain of F(1) is coupled via a rotary mechanism of the central stalk subunits to proton translocation. In terms of biological role, this protein is part of the stalk that links CF(0) to CF(1). It either transmits conformational changes from CF(0) to CF(1) or is implicated in proton conduction. The chain is ATP synthase subunit delta from Prochlorococcus marinus (strain MIT 9515).